The following is a 129-amino-acid chain: Small ribosomal subunit protein uS11 (129 aa).

This sequence belongs to the universal ribosomal protein uS11 family. As to quaternary structure, part of the 30S ribosomal subunit. Interacts with proteins S7 and S18. Binds to IF-3.

Located on the platform of the 30S subunit, it bridges several disparate RNA helices of the 16S rRNA. Forms part of the Shine-Dalgarno cleft in the 70S ribosome. The sequence is that of Small ribosomal subunit protein uS11 from Tolumonas auensis (strain DSM 9187 / NBRC 110442 / TA 4).